The primary structure comprises 425 residues: Enolase (425 aa).

Q162 is a (2R)-2-phosphoglycerate binding site. Residue E204 is the Proton donor of the active site. Mg(2+)-binding residues include D241, E284, and D311. The (2R)-2-phosphoglycerate site is built by K336, R365, S366, and K387. K336 (proton acceptor) is an active-site residue.

It belongs to the enolase family. It depends on Mg(2+) as a cofactor.

The protein resides in the cytoplasm. Its subcellular location is the secreted. It localises to the cell surface. It catalyses the reaction (2R)-2-phosphoglycerate = phosphoenolpyruvate + H2O. It functions in the pathway carbohydrate degradation; glycolysis; pyruvate from D-glyceraldehyde 3-phosphate: step 4/5. Catalyzes the reversible conversion of 2-phosphoglycerate (2-PG) into phosphoenolpyruvate (PEP). It is essential for the degradation of carbohydrates via glycolysis. This is Enolase from Brucella melitensis biotype 2 (strain ATCC 23457).